Consider the following 169-residue polypeptide: Crossover junction endodeoxyribonuclease RuvC (169 aa).

Active-site residues include aspartate 15, glutamate 75, and aspartate 147. Residues aspartate 15, glutamate 75, and aspartate 147 each coordinate Mg(2+).

This sequence belongs to the RuvC family. As to quaternary structure, homodimer which binds Holliday junction (HJ) DNA. The HJ becomes 2-fold symmetrical on binding to RuvC with unstacked arms; it has a different conformation from HJ DNA in complex with RuvA. In the full resolvosome a probable DNA-RuvA(4)-RuvB(12)-RuvC(2) complex forms which resolves the HJ. Requires Mg(2+) as cofactor.

The protein resides in the cytoplasm. It carries out the reaction Endonucleolytic cleavage at a junction such as a reciprocal single-stranded crossover between two homologous DNA duplexes (Holliday junction).. Its function is as follows. The RuvA-RuvB-RuvC complex processes Holliday junction (HJ) DNA during genetic recombination and DNA repair. Endonuclease that resolves HJ intermediates. Cleaves cruciform DNA by making single-stranded nicks across the HJ at symmetrical positions within the homologous arms, yielding a 5'-phosphate and a 3'-hydroxyl group; requires a central core of homology in the junction. The consensus cleavage sequence is 5'-(A/T)TT(C/G)-3'. Cleavage occurs on the 3'-side of the TT dinucleotide at the point of strand exchange. HJ branch migration catalyzed by RuvA-RuvB allows RuvC to scan DNA until it finds its consensus sequence, where it cleaves and resolves the cruciform DNA. The chain is Crossover junction endodeoxyribonuclease RuvC from Caulobacter vibrioides (strain ATCC 19089 / CIP 103742 / CB 15) (Caulobacter crescentus).